The following is a 206-amino-acid chain: MKHNNVIPNGHFKKHWQNYVKTWFNQPARKTRRRVARQKKAVKIFPRPTAGPLRPVVHGQTLKYNMKVRTGKGFTLEELKSAGIPKKLAPTIGIAVDHRRKNRSLEGLQSNVQRLKTYKAKLVIFPRRARKVKAGDSTAEELANATQVQGDYMPIVREKHATELVKLTTEMKSVKAFDKIRLERTNKRHAGARAKRAADAEKEEKK.

The disordered stretch occupies residues 183–206; it reads ERTNKRHAGARAKRAADAEKEEKK. Positions 186–195 are enriched in basic residues; sequence NKRHAGARAK. Positions 196 to 206 are enriched in basic and acidic residues; sequence RAADAEKEEKK.

This sequence belongs to the eukaryotic ribosomal protein eL13 family.

This Brassica napus (Rape) protein is Large ribosomal subunit protein eL13z.